Consider the following 414-residue polypeptide: Serine hydroxymethyltransferase (414 aa).

(6S)-5,6,7,8-tetrahydrofolate is bound by residues Leu-121 and 125–127 (GHL). At Lys-229 the chain carries N6-(pyridoxal phosphate)lysine.

The protein belongs to the SHMT family. In terms of assembly, homodimer. Requires pyridoxal 5'-phosphate as cofactor.

The protein resides in the cytoplasm. It catalyses the reaction (6R)-5,10-methylene-5,6,7,8-tetrahydrofolate + glycine + H2O = (6S)-5,6,7,8-tetrahydrofolate + L-serine. Its pathway is one-carbon metabolism; tetrahydrofolate interconversion. It participates in amino-acid biosynthesis; glycine biosynthesis; glycine from L-serine: step 1/1. Functionally, catalyzes the reversible interconversion of serine and glycine with tetrahydrofolate (THF) serving as the one-carbon carrier. This reaction serves as the major source of one-carbon groups required for the biosynthesis of purines, thymidylate, methionine, and other important biomolecules. Also exhibits THF-independent aldolase activity toward beta-hydroxyamino acids, producing glycine and aldehydes, via a retro-aldol mechanism. The sequence is that of Serine hydroxymethyltransferase from Variovorax paradoxus (strain S110).